The chain runs to 82 residues: RNA-binding protein Hfq (82 aa).

In terms of domain architecture, Sm spans 11 to 72; that stretch reads DTFLNAVRKS…ISTIAPSAPV (62 aa).

This sequence belongs to the Hfq family. Homohexamer.

Functionally, RNA chaperone that binds small regulatory RNA (sRNAs) and mRNAs to facilitate mRNA translational regulation in response to envelope stress, environmental stress and changes in metabolite concentrations. Also binds with high specificity to tRNAs. This chain is RNA-binding protein Hfq, found in Hyphomonas neptunium (strain ATCC 15444).